We begin with the raw amino-acid sequence, 1396 residues long: Sterol 3-beta-glucosyltransferase (1396 aa).

Basic and acidic residues predominate over residues Met1–Leu16. Disordered stretches follow at residues Met1 to Gln21, Asp40 to Met64, Ala83 to Pro196, and Glu209 to Gln232. A compositionally biased stretch (basic and acidic residues) spans Glu94 to Phe107. The segment covering Arg186 to Pro196 has biased composition (low complexity). Residues Arg238–Thr273 form the GRAM 1 domain. The region spanning Arg289 to Phe388 is the PH domain. Disordered stretches follow at residues Gly460 to Ser532 and Thr571 to Asp627. Polar residues-rich tracts occupy residues Gly484–Ser532 and Thr571–Arg584. Over residues Arg588–Leu602 the composition is skewed to basic and acidic residues. The region spanning Glu717 to Lys783 is the GRAM 2 domain. UDP-alpha-D-glucose is bound by residues Ser905, Arg906, Asp908, Ala1208, His1210, His1223, Gly1227, Thr1228, Asp1247, and Gln1248. Residues Ser1324 to Gln1343 are compositionally biased toward low complexity. The segment at Ser1324–Asn1346 is disordered.

The protein belongs to the glycosyltransferase 28 family.

Its subcellular location is the cytoplasm. It localises to the preautophagosomal structure membrane. The catalysed reaction is a sterol + UDP-alpha-D-glucose = a sterol 3-beta-D-glucoside + UDP + H(+). It carries out the reaction ergosterol + UDP-alpha-D-glucose = ergosteryl 3-beta-D-glucoside + UDP + H(+). In terms of biological role, sterol glycosyltransferase responsible for the glycosylation of ergosterol to form ergosterol-glucoside. This is Sterol 3-beta-glucosyltransferase from Emericella nidulans (strain FGSC A4 / ATCC 38163 / CBS 112.46 / NRRL 194 / M139) (Aspergillus nidulans).